A 274-amino-acid polypeptide reads, in one-letter code: Transcription factor MYB32 (274 aa).

2 HTH myb-type domains span residues 9–61 and 62–116; these read KDHT…INYL and RPDL…KRKL. 2 DNA-binding regions (H-T-H motif) span residues 37–61 and 89–112; these read WRSLPRSAGLQRCGKSCRLRWINYL and WSLIATRLPGRTDNEIKNYWNTHV. Residues 123–144 form a disordered region; it reads PATHRPINETKTSQDSSDSSKT.

Mostly expressed in roots, and, to a lower extent, in stems, flower buds, and siliques.

The protein localises to the nucleus. This chain is Transcription factor MYB32 (MYB32), found in Arabidopsis thaliana (Mouse-ear cress).